Consider the following 203-residue polypeptide: Glycerol-3-phosphate acyltransferase (203 aa).

Helical transmembrane passes span 6 to 26 (LTLL…AVLV), 82 to 102 (AISL…PIFF), 118 to 138 (APIG…LVLI), and 141 to 161 (YSSL…WWLD).

It belongs to the PlsY family. In terms of assembly, probably interacts with PlsX.

The protein localises to the cell inner membrane. It catalyses the reaction an acyl phosphate + sn-glycerol 3-phosphate = a 1-acyl-sn-glycero-3-phosphate + phosphate. Its pathway is lipid metabolism; phospholipid metabolism. In terms of biological role, catalyzes the transfer of an acyl group from acyl-phosphate (acyl-PO(4)) to glycerol-3-phosphate (G3P) to form lysophosphatidic acid (LPA). This enzyme utilizes acyl-phosphate as fatty acyl donor, but not acyl-CoA or acyl-ACP. The chain is Glycerol-3-phosphate acyltransferase from Shewanella sp. (strain MR-7).